We begin with the raw amino-acid sequence, 211 residues long: uncharacterized protein (211 aa).

It belongs to the A.longa ORF167/ORF288 family.

The protein resides in the plastid. This is an uncharacterized protein from Euglena longa (Euglenophycean alga).